A 632-amino-acid polypeptide reads, in one-letter code: Eukaryotic peptide chain release factor GTP-binding subunit ERF3B (632 aa).

2 disordered regions span residues 1–31 (MDLG…GDGI) and 162–200 (SEAK…SIPS). The span at 178–192 (ESVKEVMEEKEEVRK) shows a compositional bias: basic and acidic residues. In terms of domain architecture, tr-type G spans 205–429 (KEHVNVVFIG…YLDSLPNFNR (225 aa)). The G1 stretch occupies residues 214–221 (GHVDAGKS). 217 to 222 (DAGKST) contacts GTP. A G2 region spans residues 270–274 (GKTVE). The tract at residues 291–294 (DAPG) is G3. Residues 353–356 (NKMD) and 395–397 (SGL) contribute to the GTP site. A G4 region spans residues 353–356 (NKMD). A G5 region spans residues 395–397 (SGL).

Belongs to the TRAFAC class translation factor GTPase superfamily. Classic translation factor GTPase family. ERF3 subfamily. Component of the eRF1-eRF3-GTP ternary complex, composed of ETF1/ERF1 and ERF3 (GSPT1/ERF3A or GSPT2/ERF3B) and GTP. Component of the transient SURF (SMG1-UPF1-eRF1-eRF3) complex. Interacts with UPF1 and PABPC1. Highly expressed in brain. Moderately expressed in spleen and lung. Weakly expressed in heart, liver and kidney. Expression during the cell-cycle progression is constant.

The protein localises to the cytoplasm. It catalyses the reaction GTP + H2O = GDP + phosphate + H(+). Its function is as follows. GTPase component of the eRF1-eRF3-GTP ternary complex, a ternary complex that mediates translation termination in response to the termination codons UAA, UAG and UGA. GSPT2/ERF3B mediates ETF1/ERF1 delivery to stop codons: The eRF1-eRF3-GTP complex binds to a stop codon in the ribosomal A-site. GTP hydrolysis by GSPT2/ERF3B induces a conformational change that leads to its dissociation, permitting ETF1/ERF1 to accommodate fully in the A-site. Component of the transient SURF complex which recruits UPF1 to stalled ribosomes in the context of nonsense-mediated decay (NMD) of mRNAs containing premature stop codons. In Mus musculus (Mouse), this protein is Eukaryotic peptide chain release factor GTP-binding subunit ERF3B (Gspt2).